The primary structure comprises 2837 residues: Probable polyketide synthase 3 (2837 aa).

Residues N39–D464 enclose the Ketosynthase family 3 (KS3) domain. Residues C209, H348, and H388 each act as for beta-ketoacyl synthase activity in the active site. The acyl/malonyl transferase stretch occupies residues G664 to Y697. The For acyl/malonyl transferase activity role is filled by S674. The tract at residues I962–G1084 is N-terminal hotdog fold. Positions I962–S1255 constitute a PKS/mFAS DH domain. The active-site Proton acceptor; for dehydratase activity is H995. The segment at N1106–S1255 is C-terminal hotdog fold. D1169 functions as the Proton donor; for dehydratase activity in the catalytic mechanism. The region spanning D2330 to L2407 is the Carrier domain. At S2367 the chain carries O-(pantetheine 4'-phosphoryl)serine. The helical transmembrane segment at K2464–V2484 threads the bilayer.

Requires pantetheine 4'-phosphate as cofactor.

The protein localises to the membrane. Its function is as follows. Probable polyketide synthase. In Dictyostelium discoideum (Social amoeba), this protein is Probable polyketide synthase 3 (pks3).